We begin with the raw amino-acid sequence, 206 residues long: Protein Mabiki (206 aa).

Residues 54 to 77 (FSDQDADFPPLPKRRRLGSSSSSV) form a disordered region.

Plays a role in inducing apoptosis and is involved in the repair of head patterning defects in the embryo caused by extra maternal copies of the homeotic gene bicoid. In Drosophila melanogaster (Fruit fly), this protein is Protein Mabiki.